Reading from the N-terminus, the 474-residue chain is ATP synthase subunit beta (474 aa).

Residue 151 to 158 (GGAGVGKT) coordinates ATP.

The protein belongs to the ATPase alpha/beta chains family. As to quaternary structure, F-type ATPases have 2 components, CF(1) - the catalytic core - and CF(0) - the membrane proton channel. CF(1) has five subunits: alpha(3), beta(3), gamma(1), delta(1), epsilon(1). CF(0) has four main subunits: a(1), b(1), b'(1) and c(9-12).

The protein resides in the cell inner membrane. The enzyme catalyses ATP + H2O + 4 H(+)(in) = ADP + phosphate + 5 H(+)(out). Functionally, produces ATP from ADP in the presence of a proton gradient across the membrane. The catalytic sites are hosted primarily by the beta subunits. The protein is ATP synthase subunit beta of Jannaschia sp. (strain CCS1).